The sequence spans 242 residues: MASGWFYLSCMVLGSLGSMCILFTAYWMQYWRGGFAWDGTVLMFNWHPVLMVAGMVVLYGAASLVYRLPSSWVGPRLPWKVLHAALHLLAFTCTVVGLIAVFRFHNHSRIAHLYSLHSWLGITTVVLFACQWFLGFAVFLLPWASQWLRSLLKPLHVFFGACILSLSITSVISGINEKLFFVLKNATKPYSSLPGEAVFANSTGLLVVAFGLLVLYVLLASSWKRPDPGALTDRQPLLHDRE.

The Cytoplasmic portion of the chain corresponds to 1-4 (MASG). A helical membrane pass occupies residues 5–25 (WFYLSCMVLGSLGSMCILFTA). Positions 12–219 (VLGSLGSMCI…FGLLVLYVLL (208 aa)) constitute a Cytochrome b561 domain. Residues 26–40 (YWMQYWRGGFAWDGT) lie on the Lumenal side of the membrane. Residues 41 to 61 (VLMFNWHPVLMVAGMVVLYGA) form a helical membrane-spanning segment. Positions 47 and 67 each coordinate heme b. The Cytoplasmic segment spans residues 62 to 81 (ASLVYRLPSSWVGPRLPWKV). Positions 76 and 80 each coordinate L-ascorbate. The helical transmembrane segment at 82 to 102 (LHAALHLLAFTCTVVGLIAVF) threads the bilayer. Heme b-binding positions include His-83, 112-115 (HLYS), and His-117. Topologically, residues 103 to 119 (RFHNHSRIAHLYSLHSW) are lumenal. Residues 120–140 (LGITTVVLFACQWFLGFAVFL) form a helical membrane-spanning segment. Over 141–154 (LPWASQWLRSLLKP) the chain is Cytoplasmic. Residue Arg-149 participates in L-ascorbate binding. The helical transmembrane segment at 155–175 (LHVFFGACILSLSITSVISGI) threads the bilayer. Heme b-binding residues include His-156 and Glu-177. Over 176–202 (NEKLFFVLKNATKPYSSLPGEAVFANS) the chain is Lumenal. Residues 203-223 (TGLLVVAFGLLVLYVLLASSW) form a helical membrane-spanning segment. Position 224 (Lys-224) interacts with heme b. Over 224 to 242 (KRPDPGALTDRQPLLHDRE) the chain is Cytoplasmic.

As to quaternary structure, homodimer. The cofactor is heme b. Post-translationally, N-glycosylated. In terms of tissue distribution, present in lung, spleen, thymus and testis. Present at low level in brain, heart, liver and kidney. Expressed in the alveolar macrophages of the lung, in the white pulp of the spleen, widespread in the thymus, and in the Sertoli cells of the testis (at protein level).

Its subcellular location is the late endosome membrane. It is found in the lysosome membrane. The enzyme catalyses Fe(3+)(out) + L-ascorbate(in) = monodehydro-L-ascorbate radical(in) + Fe(2+)(out) + H(+). Transmembrane reductase that uses ascorbate as an electron donor in the cytoplasm and transfers electrons across membranes to reduce iron cations Fe(3+) into Fe(2+) in the lumen of the late endosome and lysosome. Reduced iron can then be extruded from the late endosome and lysosome to the cytoplasm by divalent metal-specific transporters. It is therefore most probably involved in endosomal and lysosomal cellular iron homeostasis. The polypeptide is Lysosomal membrane ascorbate-dependent ferrireductase CYB561A3 (Mus musculus (Mouse)).